Consider the following 323-residue polypeptide: Elongation factor P--(R)-beta-lysine ligase (323 aa).

74 to 76 (SPE) provides a ligand contact to substrate. Residues 98–100 (RNE) and Asn-107 each bind ATP. Tyr-116 is a substrate binding site. An ATP-binding site is contributed by 242-243 (EL). Residue Glu-249 participates in substrate binding. Gly-298 is an ATP binding site.

Belongs to the class-II aminoacyl-tRNA synthetase family. EpmA subfamily. Homodimer.

The enzyme catalyses D-beta-lysine + L-lysyl-[protein] + ATP = N(6)-((3R)-3,6-diaminohexanoyl)-L-lysyl-[protein] + AMP + diphosphate + H(+). With EpmB is involved in the beta-lysylation step of the post-translational modification of translation elongation factor P (EF-P). Catalyzes the ATP-dependent activation of (R)-beta-lysine produced by EpmB, forming a lysyl-adenylate, from which the beta-lysyl moiety is then transferred to the epsilon-amino group of a conserved specific lysine residue in EF-P. This Vibrio parahaemolyticus serotype O3:K6 (strain RIMD 2210633) protein is Elongation factor P--(R)-beta-lysine ligase.